The chain runs to 540 residues: Chaperonin GroEL (540 aa).

Residues Thr-29–Pro-32, Asp-86–Thr-90, Gly-413, Asn-476–Ala-478, and Asp-492 each bind ATP.

Belongs to the chaperonin (HSP60) family. Forms a cylinder of 14 subunits composed of two heptameric rings stacked back-to-back. Interacts with the co-chaperonin GroES.

The protein resides in the cytoplasm. It catalyses the reaction ATP + H2O + a folded polypeptide = ADP + phosphate + an unfolded polypeptide.. In terms of biological role, together with its co-chaperonin GroES, plays an essential role in assisting protein folding. The GroEL-GroES system forms a nano-cage that allows encapsulation of the non-native substrate proteins and provides a physical environment optimized to promote and accelerate protein folding. The chain is Chaperonin GroEL from Staphylococcus saprophyticus subsp. saprophyticus (strain ATCC 15305 / DSM 20229 / NCIMB 8711 / NCTC 7292 / S-41).